Consider the following 650-residue polypeptide: Serine/threonine-protein kinase oca2 (650 aa).

Residues 1–14 (MSVTPPNVQFNLNG) are compositionally biased toward polar residues. 2 disordered regions span residues 1 to 210 (MSVT…PHDI) and 222 to 288 (HHGK…KSSA). The residue at position 72 (Ser72) is a Phosphoserine. Positions 78–98 (NHIDPKLAEDRYRSSAARHFE) are enriched in basic and acidic residues. The span at 140-154 (PSGSTGYTSPALSQN) shows a compositional bias: polar residues. Basic residues-rich tracts occupy residues 222 to 231 (HHGKHGHHGH) and 245 to 257 (HDKH…HEKH). Positions 258 to 279 (HSSLDLRRFFKSHQKTDKEKKP) are enriched in basic and acidic residues. At Ser286 the chain carries Phosphoserine. The region spanning 302–614 (GKFGRMLGSG…IHRVFADNWI (313 aa)) is the Protein kinase domain. ATP contacts are provided by residues 308–316 (LGSGAGGSV) and Lys331. The active-site Proton acceptor is the Asp425. Positions 549–570 (PIRKTDESHSPNSKTDNSSTHK) are disordered.

This sequence belongs to the protein kinase superfamily. Ser/Thr protein kinase family.

It is found in the cytoplasm. It carries out the reaction L-seryl-[protein] + ATP = O-phospho-L-seryl-[protein] + ADP + H(+). The enzyme catalyses L-threonyl-[protein] + ATP = O-phospho-L-threonyl-[protein] + ADP + H(+). Its function is as follows. Overexpression causes cell cycle arrest. The protein is Serine/threonine-protein kinase oca2 of Schizosaccharomyces pombe (strain 972 / ATCC 24843) (Fission yeast).